A 156-amino-acid chain; its full sequence is Endoribonuclease YbeY (156 aa).

Zn(2+) contacts are provided by H122, H126, and H132.

The protein belongs to the endoribonuclease YbeY family. It depends on Zn(2+) as a cofactor.

It is found in the cytoplasm. Single strand-specific metallo-endoribonuclease involved in late-stage 70S ribosome quality control and in maturation of the 3' terminus of the 16S rRNA. The polypeptide is Endoribonuclease YbeY (Bacillus cereus (strain B4264)).